A 475-amino-acid chain; its full sequence is Bifunctional protein HldE (475 aa).

The interval 1–318 (MMQYSPKFNN…ENAIHHREET (318 aa)) is ribokinase. Position 195–198 (195–198 (NMSE)) interacts with ATP. The active site involves Asp-264. Residues 344–475 (MTNGCFDILH…NVIKKIQASK (132 aa)) form a cytidylyltransferase region.

It in the N-terminal section; belongs to the carbohydrate kinase PfkB family. This sequence in the C-terminal section; belongs to the cytidylyltransferase family. As to quaternary structure, homodimer.

The enzyme catalyses D-glycero-beta-D-manno-heptose 7-phosphate + ATP = D-glycero-beta-D-manno-heptose 1,7-bisphosphate + ADP + H(+). The catalysed reaction is D-glycero-beta-D-manno-heptose 1-phosphate + ATP + H(+) = ADP-D-glycero-beta-D-manno-heptose + diphosphate. It participates in nucleotide-sugar biosynthesis; ADP-L-glycero-beta-D-manno-heptose biosynthesis; ADP-L-glycero-beta-D-manno-heptose from D-glycero-beta-D-manno-heptose 7-phosphate: step 1/4. Its pathway is nucleotide-sugar biosynthesis; ADP-L-glycero-beta-D-manno-heptose biosynthesis; ADP-L-glycero-beta-D-manno-heptose from D-glycero-beta-D-manno-heptose 7-phosphate: step 3/4. Functionally, catalyzes the phosphorylation of D-glycero-D-manno-heptose 7-phosphate at the C-1 position to selectively form D-glycero-beta-D-manno-heptose-1,7-bisphosphate. Its function is as follows. Catalyzes the ADP transfer from ATP to D-glycero-beta-D-manno-heptose 1-phosphate, yielding ADP-D-glycero-beta-D-manno-heptose. The chain is Bifunctional protein HldE from Actinobacillus pleuropneumoniae serotype 5b (strain L20).